The following is a 455-amino-acid chain: uncharacterized protein (455 aa).

12 helical membrane passes run 19 to 39, 63 to 83, 106 to 126, 140 to 160, 173 to 195, 200 to 222, 265 to 285, 288 to 308, 324 to 344, 348 to 368, 388 to 408, and 410 to 430; these read FSLF…MFMG, ILNL…VIIS, FFIS…LLHM, FLQV…FSAI, VTIG…LFGF, VAGV…IVIV, MIVT…KVYT, ITMF…ILIG, MKSL…MTIF, LIGL…LIAM, AAGD…GIGL, and LAYL…ISFI.

Belongs to the multi antimicrobial extrusion (MATE) (TC 2.A.66.1) family.

It is found in the cell membrane. This is an uncharacterized protein from Bacillus subtilis (strain 168).